Reading from the N-terminus, the 377-residue chain is Flagellar P-ring protein (377 aa).

The signal sequence occupies residues 1–30 (MLARFLSSLLKASVTALAVVVAFGFAANFA).

It belongs to the FlgI family. The basal body constitutes a major portion of the flagellar organelle and consists of four rings (L,P,S, and M) mounted on a central rod.

It is found in the periplasm. The protein localises to the bacterial flagellum basal body. Its function is as follows. Assembles around the rod to form the L-ring and probably protects the motor/basal body from shearing forces during rotation. This chain is Flagellar P-ring protein, found in Cupriavidus pinatubonensis (strain JMP 134 / LMG 1197) (Cupriavidus necator (strain JMP 134)).